A 130-amino-acid chain; its full sequence is Small ribosomal subunit protein uS9 (130 aa).

This sequence belongs to the universal ribosomal protein uS9 family.

The sequence is that of Small ribosomal subunit protein uS9 from Azotobacter vinelandii (strain DJ / ATCC BAA-1303).